Here is a 78-residue protein sequence, read N- to C-terminus: MICOS complex subunit MIC10 (78 aa).

Ser-2 is subject to N-acetylserine. Residues 17–36 (AVVKIGTGFGLGIVFSLTFF) traverse the membrane as a helical segment. Residues 37–78 (KRRMWPLAFGSGMGLGMAYSNCQHDFQAPYLLHGKYVKEQEQ) are Mitochondrial intermembrane-facing.

The protein belongs to the MICOS complex subunit Mic10 family. As to quaternary structure, component of the mitochondrial contact site and cristae organizing system (MICOS) complex, composed of at least MICOS10/MIC10, CHCHD3/MIC19, CHCHD6/MIC25, APOOL/MIC27, IMMT/MIC60, APOO/MIC23/MIC26 and MICOS13/MIC13. This complex was also known under the names MINOS or MitOS complex. The MICOS complex associates with mitochondrial outer membrane proteins SAMM50, MTX1 and MTX2 (together described as components of the mitochondrial outer membrane sorting assembly machinery (SAM) complex) and DNAJC11, mitochondrial inner membrane protein TMEM11 and with HSPA9. The MICOS and SAM complexes together with DNAJC11 are part of a large protein complex spanning both membranes termed the mitochondrial intermembrane space bridging (MIB) complex. Interacts with IMMT/MIC60 and MICOS13/MIC13. Interacts with APOO/MIC23/MIC26 and APOOL/MIC27. Interacts with ARMC1.

The protein localises to the mitochondrion inner membrane. Its function is as follows. Component of the MICOS complex, a large protein complex of the mitochondrial inner membrane that plays crucial roles in the maintenance of crista junctions, inner membrane architecture, and formation of contact sites to the outer membrane. The chain is MICOS complex subunit MIC10 from Homo sapiens (Human).